The primary structure comprises 567 residues: Type II secretion system protein E (567 aa).

Residue 325–332 (GPTGSGKT) coordinates ATP.

Belongs to the GSP E family. In terms of assembly, forms homooligomers; most probably hexamers. Interacts with XpsL/GspL.

It localises to the cell inner membrane. It carries out the reaction ATP + H2O + cellular proteinSide 1 = ADP + phosphate + cellular proteinSide 2.. ATPase component of the type II secretion system required for the energy-dependent secretion of extracellular factors such as proteases and toxins from the periplasm. Acts as a molecular motor to provide the energy that is required for assembly of the pseudopilus and the extrusion of substrates generated in the cytoplasm. This is Type II secretion system protein E (xpsE) from Xanthomonas campestris pv. campestris (strain ATCC 33913 / DSM 3586 / NCPPB 528 / LMG 568 / P 25).